A 217-amino-acid chain; its full sequence is 2-C-methyl-D-erythritol 4-phosphate cytidylyltransferase (217 aa).

Belongs to the IspD/TarI cytidylyltransferase family. IspD subfamily.

The enzyme catalyses 2-C-methyl-D-erythritol 4-phosphate + CTP + H(+) = 4-CDP-2-C-methyl-D-erythritol + diphosphate. It participates in isoprenoid biosynthesis; isopentenyl diphosphate biosynthesis via DXP pathway; isopentenyl diphosphate from 1-deoxy-D-xylulose 5-phosphate: step 2/6. Functionally, catalyzes the formation of 4-diphosphocytidyl-2-C-methyl-D-erythritol from CTP and 2-C-methyl-D-erythritol 4-phosphate (MEP). The sequence is that of 2-C-methyl-D-erythritol 4-phosphate cytidylyltransferase from Chlamydia abortus (strain DSM 27085 / S26/3) (Chlamydophila abortus).